Consider the following 497-residue polypeptide: Vacuolar-processing enzyme beta-isozyme 1 (497 aa).

Positions 1 to 23 (MAARCWVWGFVVALLAVAAAADG) are cleaved as a signal peptide. N153 is a glycosylation site (N-linked (GlcNAc...) asparagine). H180 is an active-site residue. The active-site Nucleophile is C222. A disulfide bridge links C255 with C269. N340 carries an N-linked (GlcNAc...) asparagine glycan. 2 disulfide bridges follow: C432–C462 and C444–C479.

This sequence belongs to the peptidase C13 family. Auto-catalytic activation. As to expression, expressed in developing seeds.

The protein localises to the protein storage vacuole. It catalyses the reaction Hydrolysis of proteins and small molecule substrates at -Asn-|-Xaa- bonds.. Its function is as follows. Asparagine-specific endopeptidase that may be involved in processing of proteins targeted to vacuoles. Cysteine protease required for post-translational proteolysis of seed storage proteins in the protein storage vacuole (PSV) of developing seeds, by processing of proglutelin precursor to mature glutelin subunits, thus contributing to the formation of protein crystalline structures in PSV. This Oryza sativa subsp. japonica (Rice) protein is Vacuolar-processing enzyme beta-isozyme 1.